The following is a 791-amino-acid chain: uncharacterized protein (791 aa).

A disordered region spans residues 267–288 (APGESSAQSSYEQSTRAGDSAP). Over residues 271–283 (SSAQSSYEQSTRA) the composition is skewed to polar residues.

This is an uncharacterized protein from Treponema pallidum (strain Nichols).